Consider the following 155-residue polypeptide: uncharacterized protein (155 aa).

The span at 28 to 38 (KKGKDRPREDG) shows a compositional bias: basic and acidic residues. The interval 28 to 52 (KKGKDRPREDGTQQQPSESKGEAAC) is disordered.

This is an uncharacterized protein from Dryophytes versicolor (chameleon treefrog).